Consider the following 363-residue polypeptide: MSRPQFDPAAYAAQLEDKKARLAGLLAPFAAPAPEVFESPREHYRLRAEFRLWRETGNENRHYAMFEQGDKHTPILIEDFPIASRRINELMPRLKDAWAEPALGFKLFQVEFLTTLAGDALITLCYHRPIDAAWQQAAEALAAELGVSLVGRSRGKRIVVGRDYVEEELLVAGRRFRYRQPEGAFTQPNGEVNQKMLGWAYEALGEREDDLLELYCGNGNFTLPLATRVRKVLATEISKSSVNAALANLADNAVDNVSLVRLSAEELTQALNEVRPFRRLADIDLKSYAFGSVFVDPPRAGMDPDTCELTRRFERILYISCNPETLAQNIAQLHDTHRISRCALFDQFPYTHHMESGVLLERR.

Positions 187, 215, 220, 236, and 296 each coordinate S-adenosyl-L-methionine. Cys321 serves as the catalytic Nucleophile. The active-site Proton acceptor is Glu355.

Belongs to the class I-like SAM-binding methyltransferase superfamily. RNA M5U methyltransferase family. TrmA subfamily.

It catalyses the reaction uridine(54) in tRNA + S-adenosyl-L-methionine = 5-methyluridine(54) in tRNA + S-adenosyl-L-homocysteine + H(+). The catalysed reaction is uridine(341) in tmRNA + S-adenosyl-L-methionine = 5-methyluridine(341) in tmRNA + S-adenosyl-L-homocysteine + H(+). Functionally, dual-specificity methyltransferase that catalyzes the formation of 5-methyluridine at position 54 (m5U54) in all tRNAs, and that of position 341 (m5U341) in tmRNA (transfer-mRNA). The polypeptide is tRNA/tmRNA (uracil-C(5))-methyltransferase (Pseudomonas paraeruginosa (strain DSM 24068 / PA7) (Pseudomonas aeruginosa (strain PA7))).